We begin with the raw amino-acid sequence, 180 residues long: Translation initiation factor IF-3 (180 aa).

Belongs to the IF-3 family. In terms of assembly, monomer.

Its subcellular location is the cytoplasm. IF-3 binds to the 30S ribosomal subunit and shifts the equilibrium between 70S ribosomes and their 50S and 30S subunits in favor of the free subunits, thus enhancing the availability of 30S subunits on which protein synthesis initiation begins. This chain is Translation initiation factor IF-3, found in Mesoplasma florum (strain ATCC 33453 / NBRC 100688 / NCTC 11704 / L1) (Acholeplasma florum).